Here is a 165-residue protein sequence, read N- to C-terminus: Protein-export protein SecB (165 aa).

Belongs to the SecB family. Homotetramer, a dimer of dimers. One homotetramer interacts with 1 SecA dimer.

The protein localises to the cytoplasm. In terms of biological role, one of the proteins required for the normal export of preproteins out of the cell cytoplasm. It is a molecular chaperone that binds to a subset of precursor proteins, maintaining them in a translocation-competent state. It also specifically binds to its receptor SecA. The protein is Protein-export protein SecB of Marinobacter nauticus (strain ATCC 700491 / DSM 11845 / VT8) (Marinobacter aquaeolei).